Reading from the N-terminus, the 616-residue chain is Mitochondrial Rho GTPase 2 (616 aa).

The Cytoplasmic portion of the chain corresponds to 1-590 (MKRDVRILLL…HDTELSTASF (590 aa)). A Miro 1 domain is found at 2 to 168 (KRDVRILLLG…FYYAQKAVLH (167 aa)). GTP is bound by residues G16, K17, T18, and S19. Position 18 (T18) interacts with Mg(2+). Residue D57 participates in Mg(2+) binding. Residues S59, N118, K119, D121, A149, and K150 each coordinate GTP. 2 consecutive EF-hand domains span residues 184–219 (QCKKALTRIFTISEQDNNQILSDEELNFFQQSCFGN) and 304–339 (FGYQFLQKAFEKHDLDEDGALSPSELQSFFSVFPYT). Ca(2+)-binding residues include D199, N201, E208, D317, D319, D321, and E328. In terms of domain architecture, Miro 2 spans 416–577 (RNVFLCRVIG…YSKLATAAAF (162 aa)). G428, G430, K431, S432, and A433 together coordinate GTP. Residue S432 coordinates Mg(2+). Residue E474 coordinates Mg(2+). GTP is bound by residues K528, D530, and C559. Residues 591-613 (WLRVALGATVAAVVGFTLYKALL) traverse the membrane as a helical; Anchor for type IV membrane protein segment. Residues 614–616 (RSK) lie on the Mitochondrial intermembrane side of the membrane.

It belongs to the mitochondrial Rho GTPase family. In terms of assembly, homodimer.

Its subcellular location is the mitochondrion outer membrane. The catalysed reaction is GTP + H2O = GDP + phosphate + H(+). It catalyses the reaction ATP + H2O = ADP + phosphate + H(+). The enzyme catalyses UTP + H2O = UDP + phosphate + H(+). In terms of biological role, atypical mitochondrial nucleoside-triphosphatase (NTPase) involved in mitochondrial trafficking. Probably involved in control of anterograde transport of mitochondria and their subcellular distribution. Can hydrolyze GTP, ATP and UTP. This Xenopus tropicalis (Western clawed frog) protein is Mitochondrial Rho GTPase 2 (rhot2).